Consider the following 142-residue polypeptide: MMSFVSLLLVGILFHATQAEQLTKCEVFRELKDLKGYGGVSLPEWVCTTFHTSGYDTQAIVQNNDSTEYGLFQINNKIWCKDDQNPHSSNICNISCDKFLDDDLTDDIMCVKKILDKVGINYWLAHKALCSEKLDQWLCEKL.

The first 19 residues, 1–19 (MMSFVSLLLVGILFHATQA), serve as a signal peptide directing secretion. The 123-residue stretch at 20–142 (EQLTKCEVFR…KLDQWLCEKL (123 aa)) folds into the C-type lysozyme domain. Disulfide bonds link cysteine 25–cysteine 139, cysteine 47–cysteine 130, cysteine 80–cysteine 96, and cysteine 92–cysteine 110. N-linked (GlcNAc...) asparagine glycosylation occurs at asparagine 64. Residues lysine 98, aspartate 101, aspartate 103, aspartate 106, and aspartate 107 each coordinate Ca(2+).

This sequence belongs to the glycosyl hydrolase 22 family. Lactose synthase (LS) is a heterodimer of a catalytic component, beta1,4-galactosyltransferase (beta4Gal-T1) and a regulatory component, alpha-lactalbumin (LA). In terms of tissue distribution, mammary gland specific. Secreted in milk.

It is found in the secreted. Regulatory subunit of lactose synthase, changes the substrate specificity of galactosyltransferase in the mammary gland making glucose a good acceptor substrate for this enzyme. This enables LS to synthesize lactose, the major carbohydrate component of milk. In other tissues, galactosyltransferase transfers galactose onto the N-acetylglucosamine of the oligosaccharide chains in glycoproteins. The polypeptide is Alpha-lactalbumin (LALBA) (Bos taurus (Bovine)).